A 204-amino-acid chain; its full sequence is MIDYLYGTLDSKSTDGITIDVNGIGYEISVPISTFLKLPETRNPIKIYIVESTAGMYGGVISLYGFFTIEEREMYLLIKDKVHGIGAKKAMEYTDKISKSFANFKTAIISKNPSMLNEIFGFTKKTADKLIVALKDKISTVNVLNKEKQTGAETIKNTMVSEAIAGLITLGYKMQQARVAVTNVYEHNENITLEDLIKKSLQYL.

A domain I region spans residues Met-1–Phe-67. The domain II stretch occupies residues Thr-68 to Gln-149. The flexible linker stretch occupies residues Thr-150–Thr-154. A domain III region spans residues Ile-155 to Leu-204.

This sequence belongs to the RuvA family. Homotetramer. Forms an RuvA(8)-RuvB(12)-Holliday junction (HJ) complex. HJ DNA is sandwiched between 2 RuvA tetramers; dsDNA enters through RuvA and exits via RuvB. An RuvB hexamer assembles on each DNA strand where it exits the tetramer. Each RuvB hexamer is contacted by two RuvA subunits (via domain III) on 2 adjacent RuvB subunits; this complex drives branch migration. In the full resolvosome a probable DNA-RuvA(4)-RuvB(12)-RuvC(2) complex forms which resolves the HJ.

The protein localises to the cytoplasm. Functionally, the RuvA-RuvB-RuvC complex processes Holliday junction (HJ) DNA during genetic recombination and DNA repair, while the RuvA-RuvB complex plays an important role in the rescue of blocked DNA replication forks via replication fork reversal (RFR). RuvA specifically binds to HJ cruciform DNA, conferring on it an open structure. The RuvB hexamer acts as an ATP-dependent pump, pulling dsDNA into and through the RuvAB complex. HJ branch migration allows RuvC to scan DNA until it finds its consensus sequence, where it cleaves and resolves the cruciform DNA. This chain is Holliday junction branch migration complex subunit RuvA, found in Endomicrobium trichonymphae.